Reading from the N-terminus, the 199-residue chain is MSWLLGYMDPTEPSFVAAVITIVFNPLFWNVVARWEQRTRKLSRAFGSPHLACYSLGICILLLNILRSHCFTQAMMSQPKMEGLDNHTTYFLGLAFLGWGFVFVLSSFYALGFTGTFLGDYFGILKESRVTTFPFSVLDNPMYWGSTANYLGWALMHASPTGLLLTVLVAIVYVVALLYEEPFTAEIYRQKATRLHKRS.

At 1-12 (MSWLLGYMDPTE) the chain is on the lumenal side. Positions 13 to 33 (PSFVAAVITIVFNPLFWNVVA) form an intramembrane region, helical. Residues 34 to 45 (RWEQRTRKLSRA) are Lumenal-facing. The helical transmembrane segment at 46–66 (FGSPHLACYSLGICILLLNIL) threads the bilayer. Over 67 to 93 (RSHCFTQAMMSQPKMEGLDNHTTYFLG) the chain is Cytoplasmic. A helical membrane pass occupies residues 94–114 (LAFLGWGFVFVLSSFYALGFT). S-adenosyl-L-methionine is bound at residue 98–100 (GWG). At 115 to 157 (GTFLGDYFGILKESRVTTFPFSVLDNPMYWGSTANYLGWALMH) the chain is on the lumenal side. A helical transmembrane segment spans residues 158 to 178 (ASPTGLLLTVLVAIVYVVALL). Residues 179 to 199 (YEEPFTAEIYRQKATRLHKRS) lie on the Cytoplasmic side of the membrane. 180–181 (EE) contacts S-adenosyl-L-methionine.

Belongs to the class VI-like SAM-binding methyltransferase superfamily. PEMT/PEM2 methyltransferase family. As to expression, expressed in liver (at protein level).

It is found in the endoplasmic reticulum membrane. The protein localises to the mitochondrion membrane. It carries out the reaction a 1,2-diacyl-sn-glycero-3-phospho-N-methylethanolamine + S-adenosyl-L-methionine = a 1,2-diacyl-sn-glycero-3-phospho-N,N-dimethylethanolamine + S-adenosyl-L-homocysteine + H(+). It catalyses the reaction a 1,2-diacyl-sn-glycero-3-phospho-N,N-dimethylethanolamine + S-adenosyl-L-methionine = a 1,2-diacyl-sn-glycero-3-phosphocholine + S-adenosyl-L-homocysteine + H(+). The enzyme catalyses a 1,2-diacyl-sn-glycero-3-phosphoethanolamine + S-adenosyl-L-methionine = a 1,2-diacyl-sn-glycero-3-phospho-N-methylethanolamine + S-adenosyl-L-homocysteine + H(+). The catalysed reaction is 1,2-di-(9Z-octadecenoyl)-sn-glycero-3-phosphoethanolamine + S-adenosyl-L-methionine = 1,2-di-(9Z-octadecenoyl)-sn-glycero-3-phospho-N-methylethanolamine + S-adenosyl-L-homocysteine + H(+). It carries out the reaction 1,2-di-(9Z-octadecenoyl)-sn-glycero-3-phospho-N-methylethanolamine + S-adenosyl-L-methionine = 1,2-di-(9Z-octadecenoyl)-sn-glycero-3-phospho-N,N-dimethylethanolamine + S-adenosyl-L-homocysteine + H(+). It catalyses the reaction 1,2-di-(9Z-octadecenoyl)-sn-glycero-3-phospho-N,N-dimethylethanolamine + S-adenosyl-L-methionine = 1,2-di-(9Z-octadecenoyl)-sn-glycero-3-phosphocholine + S-adenosyl-L-homocysteine + H(+). The enzyme catalyses 1,2-di-(9Z,12Z-octadecadienoyl)-sn-glycero-3-phosphoethanolamine + S-adenosyl-L-methionine = 1,2-di-(9Z,12Z-octadecadienoyl)-sn-glycero-3-phospho-N-methylethanolamine + S-adenosyl-L-homocysteine + H(+). The catalysed reaction is 1,2-di-(9Z,12Z-octadecadienoyl)-sn-glycero-3-phospho-N-methylethanolamine + S-adenosyl-L-methionine = 1,2-di-(9Z,12Z-octadecadienoyl)-sn-glycero-3-phospho-N,N-dimethylethanolamine + S-adenosyl-L-homocysteine + H(+). It carries out the reaction 1,2-di-(9Z,12Z-octadecadienoyl)-sn-glycero-3-phospho-N,N-dimethylethanolamine + S-adenosyl-L-methionine = 1,2-di-(9Z,12Z-octadecadienoyl)-sn-glycero-3-phosphocholine + S-adenosyl-L-homocysteine + H(+). It catalyses the reaction 1,2-di-(9Z,12Z,15Z-octadecatrienoyl)-sn-glycero-3-phosphoethanolamine + S-adenosyl-L-methionine = 1,2-di-(9Z,12Z,15Z-octadecatrienoyl)-sn-glycero-3-phospho-N-methylethanolamine + S-adenosyl-L-homocysteine + H(+). The enzyme catalyses 1,2-di-(9Z,12Z,15Z-octadecatrienoyl)-sn-glycero-3-phospho-N-methylethanolamine + S-adenosyl-L-methionine = 1,2-di-(9Z,12Z,15Z-octadecatrienoyl)-sn-glycero-3-phospho-N,N-dimethylethanolamine + S-adenosyl-L-homocysteine + H(+). The catalysed reaction is 1,2-di-(9Z,12Z,15Z-octadecatrienoyl)-sn-glycero-3-phospho-N,N-dimethylethanolamine + S-adenosyl-L-methionine = 1,2-di-(9Z,12Z,15Z-octadecatrienoyl)-sn-glycero-3-phosphocholine + S-adenosyl-L-homocysteine + H(+). It carries out the reaction 1-hexadecanoyl-2-(4Z,7Z,10Z,13Z,16Z,19Z-docosahexaenoyl)-sn-glycero-3-phosphoethanolamine + S-adenosyl-L-methionine = 1-hexadecanoyl-2-(4Z,7Z,10Z,13Z,16Z,19Z-docosahexaenoyl)-sn-glycero-3-phospho-N-methylethanolamine + S-adenosyl-L-homocysteine + H(+). It catalyses the reaction 1-hexadecanoyl-2-(4Z,7Z,10Z,13Z,16Z,19Z-docosahexaenoyl)-sn-glycero-3-phospho-N-methylethanolamine + S-adenosyl-L-methionine = 1-hexadecanoyl-2-(4Z,7Z,10Z,13Z,16Z,19Z-docosahexaenoyl)-sn-glycero-3-phospho-N,N-dimethylethanolamine + S-adenosyl-L-homocysteine + H(+). The enzyme catalyses 1-hexadecanoyl-2-(4Z,7Z,10Z,13Z,16Z,19Z-docosahexaenoyl)-sn-glycero-3-phospho-N,N-dimethylethanolamine + S-adenosyl-L-methionine = 1-hexadecanoyl-2-(4Z,7Z,10Z,13Z,16Z,19Z-docosahexaenoyl)-sn-glycero-3-phosphocholine + S-adenosyl-L-homocysteine + H(+). The protein operates within phospholipid metabolism; phosphatidylcholine biosynthesis. Its function is as follows. Catalyzes the three sequential steps of the methylation pathway for the biosynthesis of phosphatidylcholine, a critical and essential component for membrane structure. Uses S-adenosylmethionine (S-adenosyl-L-methionine, SAM or AdoMet) as the methyl group donor for the methylation of phosphatidylethanolamine (1,2-diacyl-sn-glycero-3-phosphoethanolamine, PE) to phosphatidylmonomethylethanolamine (1,2-diacyl-sn-glycero-3-phospho-N-methylethanolamine, PMME), PMME to phosphatidyldimethylethanolamine (1,2-diacyl-sn-glycero-3-phospho-N,N-dimethylethanolamine, PDME), and PDME to phosphatidylcholine (1,2-diacyl-sn-glycero-3-phosphocholine, PC), producing S-adenosyl-L-homocysteine in each step. The protein is Phosphatidylethanolamine N-methyltransferase of Mus musculus (Mouse).